The chain runs to 93 residues: Small ribosomal subunit protein uS19 (93 aa).

Belongs to the universal ribosomal protein uS19 family.

Functionally, protein S19 forms a complex with S13 that binds strongly to the 16S ribosomal RNA. This is Small ribosomal subunit protein uS19 from Caldanaerobacter subterraneus subsp. tengcongensis (strain DSM 15242 / JCM 11007 / NBRC 100824 / MB4) (Thermoanaerobacter tengcongensis).